We begin with the raw amino-acid sequence, 598 residues long: Leucine aminopeptidase 2, chloroplastic (598 aa).

A chloroplast-targeting transit peptide spans 1-71 (MATAASTSAA…GHRARMGHTA (71 aa)). The Mn(2+) site is built by Lys-367 and Asp-372. The active site involves Lys-379. The Mn(2+) site is built by Asp-392, Asp-452, and Glu-454. The active site involves Arg-456.

This sequence belongs to the peptidase M17 family. Homohexamer (dimer of homotrimers). Requires Mn(2+) as cofactor.

The protein localises to the plastid. The protein resides in the chloroplast. The enzyme catalyses Release of an N-terminal amino acid, Xaa-|-Yaa-, in which Xaa is preferably Leu, but may be other amino acids including Pro although not Arg or Lys, and Yaa may be Pro. Amino acid amides and methyl esters are also readily hydrolyzed, but rates on arylamides are exceedingly low.. It carries out the reaction Release of N-terminal proline from a peptide.. In terms of biological role, presumably involved in the processing and regular turnover of intracellular proteins. Catalyzes the removal of unsubstituted N-terminal amino acids from various peptides. The chain is Leucine aminopeptidase 2, chloroplastic from Oryza sativa subsp. japonica (Rice).